The sequence spans 302 residues: MHYPTALLFLILVNGAQAFRICAFNAQRLTLAKVAREQVMDTLVRILARCDIMVLQEVVDSSGSAIPLLLRELNRFDASGPYSTLSSPQLGRTTYVETYVYFYRSHKTQVLSSYVYNDEDDVFAREPFVAQFSLPSDVLPSLVLVPLHTTPKAVEKELNALYDVFLEVSQHWQSKDVILLGDFNADCASLTKKRLDKLELRTEPGFHWVIADGEDTTVRASTHCAYDRIVLHGERCRSLLHTAAAFDFPTTFQLTEEEALNISDHYPVEVELKLSQAHSVQPLSLTVLLLLSLLSPQLCPAT.

The N-terminal stretch at 1-18 (MHYPTALLFLILVNGAQA) is a signal peptide. Active-site residues include Glu-97 and His-148. The cysteines at positions 187 and 224 are disulfide-linked. Asn-261 carries an N-linked (GlcNAc...) asparagine glycan.

The protein belongs to the DNase I family.

The protein resides in the endoplasmic reticulum. The sequence is that of Deoxyribonuclease-1-like 1 (DNASE1L1) from Chlorocebus aethiops (Green monkey).